Consider the following 77-residue polypeptide: Pollen allergen Amb p 5b (77 aa).

An N-terminal signal peptide occupies residues 1 to 22; sequence MNNEKNVSFEFIGSTNEVDEIK. 3 cysteine pairs are disulfide-bonded: C26/C61, C33/C48, and C40/C54.

The protein resides in the secreted. This Ambrosia psilostachya (Western ragweed) protein is Pollen allergen Amb p 5b.